We begin with the raw amino-acid sequence, 179 residues long: Sec-independent protein translocase protein TatB (179 aa).

The chain crosses the membrane as a helical span at residues 1 to 21; that stretch reads MLDLGLSKMALIGVVALVVLG. The span at 101-115 shows a compositional bias: low complexity; the sequence is GAAGDAGSVGSPGSD. The segment at 101–134 is disordered; that stretch reads GAAGDAGSVGSPGSDTPAAPSWRGSSAALAPKRR.

It belongs to the TatB family. The Tat system comprises two distinct complexes: a TatABC complex, containing multiple copies of TatA, TatB and TatC subunits, and a separate TatA complex, containing only TatA subunits. Substrates initially bind to the TatABC complex, which probably triggers association of the separate TatA complex to form the active translocon.

Its subcellular location is the cell inner membrane. Its function is as follows. Part of the twin-arginine translocation (Tat) system that transports large folded proteins containing a characteristic twin-arginine motif in their signal peptide across membranes. Together with TatC, TatB is part of a receptor directly interacting with Tat signal peptides. TatB may form an oligomeric binding site that transiently accommodates folded Tat precursor proteins before their translocation. The polypeptide is Sec-independent protein translocase protein TatB (Burkholderia orbicola (strain AU 1054)).